The chain runs to 422 residues: UDP-N-acetylglucosamine 1-carboxyvinyltransferase (422 aa).

22 to 23 (KN) contacts phosphoenolpyruvate. Arginine 92 lines the UDP-N-acetyl-alpha-D-glucosamine pocket. The Proton donor role is filled by cysteine 116. Cysteine 116 carries the 2-(S-cysteinyl)pyruvic acid O-phosphothioketal modification. UDP-N-acetyl-alpha-D-glucosamine contacts are provided by residues 121–125 (RPIDL), aspartate 307, and leucine 329.

This sequence belongs to the EPSP synthase family. MurA subfamily.

It localises to the cytoplasm. It carries out the reaction phosphoenolpyruvate + UDP-N-acetyl-alpha-D-glucosamine = UDP-N-acetyl-3-O-(1-carboxyvinyl)-alpha-D-glucosamine + phosphate. The protein operates within cell wall biogenesis; peptidoglycan biosynthesis. In terms of biological role, cell wall formation. Adds enolpyruvyl to UDP-N-acetylglucosamine. This Sulfurovum sp. (strain NBC37-1) protein is UDP-N-acetylglucosamine 1-carboxyvinyltransferase.